Consider the following 87-residue polypeptide: Large ribosomal subunit protein bL31B (87 aa).

It belongs to the bacterial ribosomal protein bL31 family. Type B subfamily. As to quaternary structure, part of the 50S ribosomal subunit.

This chain is Large ribosomal subunit protein bL31B, found in Burkholderia ambifaria (strain MC40-6).